Consider the following 75-residue polypeptide: Large ribosomal subunit protein bL31 (75 aa).

It belongs to the bacterial ribosomal protein bL31 family. Type A subfamily. In terms of assembly, part of the 50S ribosomal subunit.

Functionally, binds the 23S rRNA. This chain is Large ribosomal subunit protein bL31, found in Bradyrhizobium sp. (strain BTAi1 / ATCC BAA-1182).